We begin with the raw amino-acid sequence, 280 residues long: 4-diphosphocytidyl-2-C-methyl-D-erythritol kinase (280 aa).

The active site involves lysine 8. 91 to 101 (PVAAGLAGGST) is an ATP binding site. The active site involves aspartate 133.

Belongs to the GHMP kinase family. IspE subfamily.

The enzyme catalyses 4-CDP-2-C-methyl-D-erythritol + ATP = 4-CDP-2-C-methyl-D-erythritol 2-phosphate + ADP + H(+). It functions in the pathway isoprenoid biosynthesis; isopentenyl diphosphate biosynthesis via DXP pathway; isopentenyl diphosphate from 1-deoxy-D-xylulose 5-phosphate: step 3/6. Its function is as follows. Catalyzes the phosphorylation of the position 2 hydroxy group of 4-diphosphocytidyl-2C-methyl-D-erythritol. This chain is 4-diphosphocytidyl-2-C-methyl-D-erythritol kinase, found in Clostridium botulinum (strain 657 / Type Ba4).